A 177-amino-acid chain; its full sequence is Ribonuclease M5 (177 aa).

Positions 5 to 99 (KQIIIVEGKT…NKTSKKIGIA (95 aa)) constitute a Toprim domain. Glu11, Asp59, and Asp61 together coordinate Mg(2+).

The protein belongs to the ribonuclease M5 family. Mg(2+) is required as a cofactor.

The protein localises to the cytoplasm. The enzyme catalyses Endonucleolytic cleavage of RNA, removing 21 and 42 nucleotides, respectively, from the 5'- and 3'-termini of a 5S-rRNA precursor.. In terms of biological role, required for correct processing of both the 5' and 3' ends of 5S rRNA precursor. Cleaves both sides of a double-stranded region yielding mature 5S rRNA in one step. This chain is Ribonuclease M5, found in Mycoplasma mycoides subsp. mycoides SC (strain CCUG 32753 / NCTC 10114 / PG1).